The chain runs to 315 residues: Methionyl-tRNA formyltransferase (315 aa).

Position 113–116 (113–116 (SILP)) interacts with (6S)-5,6,7,8-tetrahydrofolate.

This sequence belongs to the Fmt family.

It carries out the reaction L-methionyl-tRNA(fMet) + (6R)-10-formyltetrahydrofolate = N-formyl-L-methionyl-tRNA(fMet) + (6S)-5,6,7,8-tetrahydrofolate + H(+). Functionally, attaches a formyl group to the free amino group of methionyl-tRNA(fMet). The formyl group appears to play a dual role in the initiator identity of N-formylmethionyl-tRNA by promoting its recognition by IF2 and preventing the misappropriation of this tRNA by the elongation apparatus. The polypeptide is Methionyl-tRNA formyltransferase (Vibrio cholerae serotype O1 (strain M66-2)).